A 450-amino-acid polypeptide reads, in one-letter code: Bifunctional apoptosis regulator (450 aa).

Residues 1-24 form a disordered region; that stretch reads MEEPQKNDLSMRGQEEDHPVRSSG. At 1 to 140 the chain is on the cytoplasmic side; the sequence is MEEPQKNDLS…PSTGRVNQQR (140 aa). Residues 34–74 form an RING-type zinc finger; sequence CHCCYDTLVNPTTLNCGHSFCRHCLALWWMSSKKTECPECR. A helical membrane pass occupies residues 141-161; that stretch reads GGGFFSGVLTALTGVAVILLV. Over 162-331 the chain is Extracellular; sequence YHWRSRESEH…REPTWKQWRE (170 aa). Residues 182–249 enclose the SAM domain; that stretch reads WTTEEVVLWL…LMELERVRAL (68 aa). N232 carries N-linked (GlcNAc...) asparagine glycosylation. Residues 332 to 352 traverse the membrane as a helical segment; it reads FLIKYSFLPYQLIAEFAWDWL. Topologically, residues 353–360 are cytoplasmic; the sequence is EVHYWTSR. The helical transmembrane segment at 361-381 threads the bilayer; sequence FLIVNAMLLSVLELFSFWRIW. Over 382 to 404 the chain is Extracellular; it reads SRSELKTVPQRMWSHFWKVSTQG. A helical membrane pass occupies residues 405–425; the sequence is LFMAMFWPLIPQFVCNCLFYW. The Cytoplasmic segment spans residues 426 to 450; it reads ALYFNPIINIDLVVKEIRRLETQVF.

In terms of assembly, interacts with CASP8, BCL2 and BCL2L1 through SAM domain and also with HIP1, IFT57, ESRRBL1 and BCAP31. Interacts with NGFR; this interaction inhibits NF-kappa-B and JNK-related signaling pathways. Mediates RING-dependent self-ubiquitination leading to proteasomal degradation.

Its subcellular location is the endoplasmic reticulum membrane. It carries out the reaction S-ubiquitinyl-[E2 ubiquitin-conjugating enzyme]-L-cysteine + [acceptor protein]-L-lysine = [E2 ubiquitin-conjugating enzyme]-L-cysteine + N(6)-ubiquitinyl-[acceptor protein]-L-lysine.. Functionally, membrane-bound E3 ubiquitin ligase that plays a role in several processes including apoptosis regulation or reticulum endoplasmic stress. Has anti-apoptotic activity, both for apoptosis triggered via death-receptors and via mitochondrial factors. Contributes to the dynamic control of IRE1/ERN1 signaling during ER stress by inducing BAX inhibitor 1/TMBIM6 proteasomal degradation. Promotes the activation of TGF-beta signaling by mediating the 'Lys-63'-linked ubiquitination of TGFBR1 which is critical to activate the pathway. Together with NGFR, negatively regulates NF-kappa-B and JNK-related signaling pathways. Promotes the proteasome-mediated degradation of PNPLA3, a protein involveld in lipid metabolism. The polypeptide is Bifunctional apoptosis regulator (Bfar) (Rattus norvegicus (Rat)).